A 279-amino-acid chain; its full sequence is Ribosomal RNA small subunit methyltransferase J (279 aa).

S-adenosyl-L-methionine-binding positions include 138–139 (ER) and Asp-194.

This sequence belongs to the methyltransferase superfamily. RsmJ family.

It localises to the cytoplasm. It catalyses the reaction guanosine(1516) in 16S rRNA + S-adenosyl-L-methionine = N(2)-methylguanosine(1516) in 16S rRNA + S-adenosyl-L-homocysteine + H(+). In terms of biological role, specifically methylates the guanosine in position 1516 of 16S rRNA. In Acinetobacter baumannii (strain ACICU), this protein is Ribosomal RNA small subunit methyltransferase J.